Here is a 377-residue protein sequence, read N- to C-terminus: 4-hydroxy-tetrahydrodipicolinate synthase 2, chloroplastic (377 aa).

The N-terminal 51 residues, Met1 to Ala51, are a transit peptide targeting the chloroplast. Thr120 provides a ligand contact to pyruvate. The active-site Proton donor/acceptor is the Tyr206. Catalysis depends on Lys234, which acts as the Schiff-base intermediate with substrate. Ile273 serves as a coordination point for pyruvate.

The protein belongs to the DapA family. In terms of assembly, tetramer of modified subunits derived from two genes in different combinations.

Its subcellular location is the plastid. It is found in the chloroplast. The catalysed reaction is L-aspartate 4-semialdehyde + pyruvate = (2S,4S)-4-hydroxy-2,3,4,5-tetrahydrodipicolinate + H2O + H(+). It functions in the pathway amino-acid biosynthesis; L-lysine biosynthesis via DAP pathway; (S)-tetrahydrodipicolinate from L-aspartate: step 3/4. With respect to regulation, sensitive to lysine inhibition. This inhibition increase in an allosteric manner with increasing concentration of the inhibitor. In terms of biological role, catalyzes the condensation of (S)-aspartate-beta-semialdehyde [(S)-ASA] and pyruvate to 4-hydroxy-tetrahydrodipicolinate (HTPA). In Triticum aestivum (Wheat), this protein is 4-hydroxy-tetrahydrodipicolinate synthase 2, chloroplastic.